A 122-amino-acid polypeptide reads, in one-letter code: Protein translocase subunit SecE (122 aa).

3 helical membrane passes run 14 to 34 (LLKW…NQYF), 38 to 58 (PILY…FLAL), and 93 to 113 (LIVV…DSLL).

Belongs to the SecE/SEC61-gamma family. As to quaternary structure, component of the Sec protein translocase complex. Heterotrimer consisting of SecY, SecE and SecG subunits. The heterotrimers can form oligomers, although 1 heterotrimer is thought to be able to translocate proteins. Interacts with the ribosome. Interacts with SecDF, and other proteins may be involved. Interacts with SecA.

It localises to the cell inner membrane. Its function is as follows. Essential subunit of the Sec protein translocation channel SecYEG. Clamps together the 2 halves of SecY. May contact the channel plug during translocation. The protein is Protein translocase subunit SecE of Pseudomonas aeruginosa (strain ATCC 15692 / DSM 22644 / CIP 104116 / JCM 14847 / LMG 12228 / 1C / PRS 101 / PAO1).